Reading from the N-terminus, the 145-residue chain is Eukaryotic translation initiation factor 1A (145 aa).

Basic residues predominate over residues 1 to 15; it reads MPKNKGKGGKNRKRG. Residues 1–25 form a disordered region; it reads MPKNKGKGGKNRKRGKNEADDDKRE. Positions 16 to 25 are enriched in basic and acidic residues; that stretch reads KNEADDDKRE. In terms of domain architecture, S1-like spans 22–96; it reads DKRELVFKED…DKADVILKLM (75 aa).

This sequence belongs to the eIF-1A family.

In terms of biological role, seems to be required for maximal rate of protein biosynthesis. Enhances ribosome dissociation into subunits and stabilizes the binding of the initiator Met-tRNA(I) to 40 S ribosomal subunits. This Onobrychis viciifolia (Common sainfoin) protein is Eukaryotic translation initiation factor 1A.